Reading from the N-terminus, the 190-residue chain is Probable nicotinate-nucleotide adenylyltransferase (190 aa).

It belongs to the NadD family.

It catalyses the reaction nicotinate beta-D-ribonucleotide + ATP + H(+) = deamido-NAD(+) + diphosphate. It functions in the pathway cofactor biosynthesis; NAD(+) biosynthesis; deamido-NAD(+) from nicotinate D-ribonucleotide: step 1/1. Catalyzes the reversible adenylation of nicotinate mononucleotide (NaMN) to nicotinic acid adenine dinucleotide (NaAD). This chain is Probable nicotinate-nucleotide adenylyltransferase, found in Frankia casuarinae (strain DSM 45818 / CECT 9043 / HFP020203 / CcI3).